Here is a 326-residue protein sequence, read N- to C-terminus: Olfactory receptor 10X1 (326 aa).

Residues 1–41 lie on the Extracellular side of the membrane; that stretch reads MVLNVYCCFFQISDIQTMKINQTILKEFILVGFSVYPHVQT. An N-linked (GlcNAc...) asparagine glycan is attached at Asn21. The helical transmembrane segment at 42-62 threads the bilayer; the sequence is FLFVVFFCLYLLTLAGNLIIM. The Cytoplasmic segment spans residues 63 to 70; the sequence is GLTWVDRS. The helical transmembrane segment at 71-91 threads the bilayer; sequence LHTPMYLFLSALSFSETCYTL. Residues 92-115 are Extracellular-facing; sequence TIVPKMLEDLLAKDRSISVTGCSL. Cys113 and Cys205 are joined by a disulfide. A helical transmembrane segment spans residues 116 to 136; it reads QMCFFLGLGGTNCIILTLMGY. The Cytoplasmic portion of the chain corresponds to 137–155; sequence DRFLAICNPLRYPLLMTNI. The chain crosses the membrane as a helical span at residues 156–176; it reads VCGQLVASACTAGFFISLTET. Residues 177-213 lie on the Extracellular side of the membrane; that stretch reads ALIFRDSFCRPNLVKHFFCHMLAVIRLSCIDSNHTEF. Asn209 carries an N-linked (GlcNAc...) asparagine glycan. Residues 214-233 traverse the membrane as a helical segment; that stretch reads IITLISVSGLLGTLLLIILT. The Cytoplasmic portion of the chain corresponds to 234–253; the sequence is DVFIISTVLRIPSAEGKQKA. A helical membrane pass occupies residues 254 to 274; the sequence is FTTCASHLTVVIIHFGFASIV. Residues 275 to 284 are Extracellular-facing; it reads YLKPEASGDD. The chain crosses the membrane as a helical span at residues 285-305; that stretch reads TLIAVPYTVITPFLSPIIFSL. At 306–326 the chain is on the cytoplasmic side; it reads RNKDMKNAFRRMMGNTVALKK.

Belongs to the G-protein coupled receptor 1 family.

The protein resides in the cell membrane. In terms of biological role, odorant receptor. This is Olfactory receptor 10X1 (OR10X1) from Homo sapiens (Human).